Here is a 358-residue protein sequence, read N- to C-terminus: DNA polymerase IV (358 aa).

Residues 6–187 enclose the UmuC domain; sequence IIHIDMDYFF…LDIGDFPGVG (182 aa). D10 and D105 together coordinate Mg(2+). E106 is an active-site residue.

It belongs to the DNA polymerase type-Y family. As to quaternary structure, monomer. Mg(2+) serves as cofactor.

Its subcellular location is the cytoplasm. The catalysed reaction is DNA(n) + a 2'-deoxyribonucleoside 5'-triphosphate = DNA(n+1) + diphosphate. In terms of biological role, poorly processive, error-prone DNA polymerase involved in untargeted mutagenesis. Copies undamaged DNA at stalled replication forks, which arise in vivo from mismatched or misaligned primer ends. These misaligned primers can be extended by PolIV. Exhibits no 3'-5' exonuclease (proofreading) activity. May be involved in translesional synthesis, in conjunction with the beta clamp from PolIII. This Staphylococcus haemolyticus (strain JCSC1435) protein is DNA polymerase IV.